We begin with the raw amino-acid sequence, 366 residues long: Sodium-potassium/proton antiporter ChaA (366 aa).

Residues 1-16 (MSNAQEAVKTRHKETS) are Cytoplasmic-facing. Transmembrane regions (helical) follow at residues 17 to 37 (LIFP…QTLP) and 38 to 58 (VVIA…FSVV). Residues 59 to 74 (RHADVLAHRLGEPYGS) lie on the Cytoplasmic side of the membrane. A helical membrane pass occupies residues 75-95 (LILSLSVVILEVSLISALMAT). Residues 96–106 (GDAAPTLMRDT) are Periplasmic-facing. The chain crosses the membrane as a helical span at residues 107–127 (LYSIIMIVTGGLVGFSLLLGG). The Cytoplasmic portion of the chain corresponds to 128–143 (RKFATQYMNLFGIKQY). Residues 144 to 164 (LIALFPLAIIVLVFPMALPAA) form a helical membrane-spanning segment. The Periplasmic segment spans residues 165-167 (NFS). Residues 168–188 (TGQALLVALISAAMYGVFLLI) traverse the membrane as a helical segment. Over 189-216 (QTKTHQSLFVYEHEDDSDDDDPHHGKPS) the chain is Cytoplasmic. A helical transmembrane segment spans residues 217-237 (AHSSLWHAIWLIIHLIAVIAV). Residues 238–255 (TKMNASSLETLLDSMNAP) lie on the Periplasmic side of the membrane. The helical transmembrane segment at 256 to 276 (VAFTGFLVALLILSPEGLGAL) threads the bilayer. Topologically, residues 277–290 (KAVLNNQVQRAMNL) are cytoplasmic. A helical transmembrane segment spans residues 291 to 311 (FFGSVLATISLTVPVVTLIAF). Topologically, residues 312–318 (MTGNELQ) are periplasmic. The helical transmembrane segment at 319–339 (FALGAPEMVVMVASLVLCHIS) threads the bilayer. Residues 340 to 345 (FSTGRT) are Cytoplasmic-facing. A helical membrane pass occupies residues 346–366 (NVLNGAAHLALFAAYLMTIFA).

This sequence belongs to the Ca(2+):cation antiporter (CaCA) (TC 2.A.19) family.

Its subcellular location is the cell inner membrane. It catalyses the reaction Na(+)(in) + H(+)(out) = Na(+)(out) + H(+)(in). The enzyme catalyses K(+)(in) + H(+)(out) = K(+)(out) + H(+)(in). It carries out the reaction Ca(2+)(in) + H(+)(out) = Ca(2+)(out) + H(+)(in). With respect to regulation, pronounced pH dependence with sodium as substrate. Ca(2+)/H(+) and Na(+)/H(+) antiporter activities are both inhibited by magnesium. Ca(2+)/H(+) activity is inhibited by the proton ionophore carbonyl cyanide m-chlorophenylhydrazone (CCCP). Its function is as follows. Sodium exporter that functions mainly at alkaline pH. Can also function as a potassium/proton and calcium/proton antiporter at alkaline pH. Does not play a major role in calcium export. The K(+)/H(+) antiporter activity may enable E.coli to adapt to K(+) salinity stress and to maintain K(+) homeostasis. The protein is Sodium-potassium/proton antiporter ChaA of Escherichia coli (strain K12).